Reading from the N-terminus, the 274-residue chain is NH(3)-dependent NAD(+) synthetase (274 aa).

46-53 (GISGGQDS) serves as a coordination point for ATP. Asp-52 contacts Mg(2+). Arg-140 provides a ligand contact to deamido-NAD(+). Thr-160 serves as a coordination point for ATP. Residue Glu-165 participates in Mg(2+) binding. 2 residues coordinate deamido-NAD(+): Lys-173 and Asp-180. Lys-189 and Thr-211 together coordinate ATP. 260–261 (HK) is a deamido-NAD(+) binding site.

The protein belongs to the NAD synthetase family. As to quaternary structure, homodimer.

The enzyme catalyses deamido-NAD(+) + NH4(+) + ATP = AMP + diphosphate + NAD(+) + H(+). Its pathway is cofactor biosynthesis; NAD(+) biosynthesis; NAD(+) from deamido-NAD(+) (ammonia route): step 1/1. Its function is as follows. Catalyzes the ATP-dependent amidation of deamido-NAD to form NAD. Uses ammonia as a nitrogen source. The protein is NH(3)-dependent NAD(+) synthetase of Lactococcus lactis subsp. cremoris (strain SK11).